The following is a 193-amino-acid chain: MKTSSLIAMRLIIFYLLSVVGRSTAAVEEAPASSLHIPRLNPLSSNLEYDEPSEKRAYAYISEYKRLPLYNFGIGKRWIDNSEDKRTRPFSFGIGKRLRDYRFGIGKRNSGYRPLGMDFSVDNMDFHSREDNLDDFIDDKRGGQPFSFGIGKRGWKLPMGEMAVSGRRLNDVVGPKYLLGLGKGLSENENLIQ.

An N-terminal signal peptide occupies residues 1–25; sequence MKTSSLIAMRLIIFYLLSVVGRSTA. Positions 26–64 are excised as a propeptide; the sequence is AVEEAPASSLHIPRLNPLSSNLEYDEPSEKRAYAYISEY. Isoleucine 74 carries the post-translational modification Isoleucine amide. Residues 78–84 constitute a propeptide that is removed on maturation; it reads WIDNSED. Isoleucine amide is present on residues isoleucine 94 and isoleucine 105. Positions 109-139 are excised as a propeptide; sequence NSGYRPLGMDFSVDNMDFHSREDNLDDFIDD. Residue isoleucine 150 is modified to Isoleucine amide. Serine amide is present on serine 165. Residues 169-193 constitute a propeptide that is removed on maturation; it reads LNDVVGPKYLLGLGKGLSENENLIQ.

It belongs to the allatostatin family. In terms of tissue distribution, allatostatins A1, A2 and A3 are expressed in brain, antennal lobes, optical lobes, gnathal ganglia, the retrocerebral complex and thoracic, abdominal and ventral ganglia. Allatostain A4 is expressed in brain (at protein level).

Its subcellular location is the secreted. Functionally, may act as a neurotransmitter or neuromodulator. This Camponotus floridanus (Florida carpenter ant) protein is Allatostatin A.